Reading from the N-terminus, the 191-residue chain is Lipopolysaccharide export system protein LptC (191 aa).

Residues 7 to 25 form a helical membrane-spanning segment; sequence WVIIVLSLAVLVMIGINMA.

It belongs to the LptC family. As to quaternary structure, component of the lipopolysaccharide transport and assembly complex. Interacts with LptA and the LptBFG transporter complex.

The protein localises to the cell inner membrane. Functionally, involved in the assembly of lipopolysaccharide (LPS). Required for the translocation of LPS from the inner membrane to the outer membrane. Facilitates the transfer of LPS from the inner membrane to the periplasmic protein LptA. Could be a docking site for LptA. The protein is Lipopolysaccharide export system protein LptC of Escherichia coli O157:H7.